Here is a 383-residue protein sequence, read N- to C-terminus: Homeobox protein SHOOT MERISTEMLESS (383 aa).

The tract at residues 37–58 (HQQHHGHDQQHQHQQQHDGYAY) is disordered. In terms of domain architecture, ELK spans 263 to 283 (ELKGQLLRKYSGYLGSLKQEF). The homeobox; TALE-type DNA-binding region spans 284–347 (MKKRKKGKLP…NQRKRHWKPS (64 aa)).

The protein belongs to the TALE/KNOX homeobox family.

The protein resides in the nucleus. Functionally, required for shoot apical meristem formation during embryogenesis. Probably binds to the DNA sequence 5'-TGAC-3'. The protein is Homeobox protein SHOOT MERISTEMLESS (STM) of Brassica oleracea (Wild cabbage).